The chain runs to 323 residues: tRNA N6-adenosine threonylcarbamoyltransferase (323 aa).

Fe cation-binding residues include His110 and His114. Residues 131–135 (VASGG), Asp164, Gly177, and Asn264 each bind substrate. Fe cation is bound at residue Asp288.

It belongs to the KAE1 / TsaD family. The cofactor is Fe(2+).

It localises to the cytoplasm. The catalysed reaction is L-threonylcarbamoyladenylate + adenosine(37) in tRNA = N(6)-L-threonylcarbamoyladenosine(37) in tRNA + AMP + H(+). Functionally, required for the formation of a threonylcarbamoyl group on adenosine at position 37 (t(6)A37) in tRNAs that read codons beginning with adenine. Is involved in the transfer of the threonylcarbamoyl moiety of threonylcarbamoyl-AMP (TC-AMP) to the N6 group of A37, together with TsaE and TsaB. TsaD likely plays a direct catalytic role in this reaction. The chain is tRNA N6-adenosine threonylcarbamoyltransferase from Thermus thermophilus (strain ATCC BAA-163 / DSM 7039 / HB27).